The sequence spans 45 residues: Photosystem II reaction center protein K (45 aa).

A propeptide spanning residues 1 to 8 (MEGILFLA) is cleaved from the precursor. The chain crosses the membrane as a helical span at residues 24–44 (APVIPVFFLLLAFVWQAAVGF).

It belongs to the PsbK family. PSII is composed of 1 copy each of membrane proteins PsbA, PsbB, PsbC, PsbD, PsbE, PsbF, PsbH, PsbI, PsbJ, PsbK, PsbL, PsbM, PsbT, PsbX, PsbY, PsbZ, Psb30/Ycf12, at least 3 peripheral proteins of the oxygen-evolving complex and a large number of cofactors. It forms dimeric complexes.

Its subcellular location is the plastid. It is found in the chloroplast thylakoid membrane. In terms of biological role, one of the components of the core complex of photosystem II (PSII). PSII is a light-driven water:plastoquinone oxidoreductase that uses light energy to abstract electrons from H(2)O, generating O(2) and a proton gradient subsequently used for ATP formation. It consists of a core antenna complex that captures photons, and an electron transfer chain that converts photonic excitation into a charge separation. This chain is Photosystem II reaction center protein K, found in Guillardia theta (Cryptophyte).